The primary structure comprises 825 residues: Probable inorganic carbon transporter subunit DabA (825 aa).

Zn(2+) contacts are provided by Cys346, Asp348, His516, and Cys531.

It belongs to the inorganic carbon transporter (TC 9.A.2) DabA family. In terms of assembly, forms a complex with DabB. The cofactor is Zn(2+).

The protein resides in the cell inner membrane. Part of an energy-coupled inorganic carbon pump. This Paracidovorax citrulli (strain AAC00-1) (Acidovorax citrulli) protein is Probable inorganic carbon transporter subunit DabA.